The primary structure comprises 209 residues: Putative BTB/POZ domain-containing protein At2g40450 (209 aa).

In terms of domain architecture, BTB spans 24-98 (ADVRLKAGDS…IYRVDGSICS (75 aa)).

The protein operates within protein modification; protein ubiquitination. May act as a substrate-specific adapter of an E3 ubiquitin-protein ligase complex (CUL3-RBX1-BTB) which mediates the ubiquitination and subsequent proteasomal degradation of target proteins. The chain is Putative BTB/POZ domain-containing protein At2g40450 from Arabidopsis thaliana (Mouse-ear cress).